A 228-amino-acid chain; its full sequence is 7-cyano-7-deazaguanine synthase (228 aa).

An ATP-binding site is contributed by 9-19 (LSGGPDSTTVL). The Zn(2+) site is built by Cys193, Cys203, Cys206, and Cys209.

The protein belongs to the QueC family. It depends on Zn(2+) as a cofactor.

The catalysed reaction is 7-carboxy-7-deazaguanine + NH4(+) + ATP = 7-cyano-7-deazaguanine + ADP + phosphate + H2O + H(+). It participates in purine metabolism; 7-cyano-7-deazaguanine biosynthesis. In terms of biological role, catalyzes the ATP-dependent conversion of 7-carboxy-7-deazaguanine (CDG) to 7-cyano-7-deazaguanine (preQ(0)). The chain is 7-cyano-7-deazaguanine synthase from Rickettsia rickettsii (strain Iowa).